Reading from the N-terminus, the 238-residue chain is Ribonuclease PH (238 aa).

Residues arginine 86 and 124–126 contribute to the phosphate site; that span reads GTR.

The protein belongs to the RNase PH family. In terms of assembly, homohexameric ring arranged as a trimer of dimers.

It catalyses the reaction tRNA(n+1) + phosphate = tRNA(n) + a ribonucleoside 5'-diphosphate. In terms of biological role, phosphorolytic 3'-5' exoribonuclease that plays an important role in tRNA 3'-end maturation. Removes nucleotide residues following the 3'-CCA terminus of tRNAs; can also add nucleotides to the ends of RNA molecules by using nucleoside diphosphates as substrates, but this may not be physiologically important. Probably plays a role in initiation of 16S rRNA degradation (leading to ribosome degradation) during starvation. The chain is Ribonuclease PH from Solibacter usitatus (strain Ellin6076).